Here is a 339-residue protein sequence, read N- to C-terminus: Cathepsin L (339 aa).

Positions 1-17 (MRTVLVALLALVALTQA) are cleaved as a signal peptide. A propeptide spans 18 to 121 (ISPLDLIKEE…ATYIPPAHVT (104 aa)) (activation peptide). N-linked (GlcNAc...) asparagine glycosylation is present at Asn-96. Cystine bridges form between Cys-143/Cys-186, Cys-177/Cys-219, and Cys-278/Cys-328. Cys-146 is an active-site residue. His-285 is an active-site residue. Residues 295 to 298 (DESG) constitute a propeptide that is removed on maturation. Asn-306 is an active-site residue.

The protein belongs to the peptidase C1 family. In terms of assembly, dimer of a heavy and a light chain linked by disulfide bonds.

The protein resides in the lysosome. The enzyme catalyses Specificity close to that of papain. As compared to cathepsin B, cathepsin L exhibits higher activity toward protein substrates, but has little activity on Z-Arg-Arg-NHMec, and no peptidyl-dipeptidase activity.. In terms of biological role, important for the overall degradation of proteins in lysosomes. Required for differentiation of imaginal disks. The chain is Cathepsin L from Sarcophaga peregrina (Flesh fly).